The chain runs to 518 residues: MAPKISISLNPPYNGEFYSSNDQMSGIVSLQLTKALSIRKISVILKGFSETLTKIDQEYMFQQNGMMMPGQDNKSFHTLMKFEQRVFPPDNVWNALDGSSKPFKVKPGSYNYSFQFEKFPRKPECLKNHTAKTVAFVTRNNARLPPTFNSHWQEFNKIDNLDLYFYSFGKVIYMVQVQIELGKSSSWFKPFHKLIREIETFEFIPEPKDLIVEPDEDDNEELNAFSNNSRGNSLVTNNEFFNSSNLKVPSKDVKVVNGVGYIKSDRNFSQANSILIENGDIRSRPVSSVTSTRQSTRLVNGMKVFPSTYKMGLPDGESNMRIEVRSRDLKQIYRKDYLFRSGSQNFDKVYVVMEGNIASLSKMQITPLKLQLNLLETTTYLSQGIANGNYSSLKLIEIDLNQLKSNKPLLDLNEIRENFDGSMFECELRLKDHPILRKLVFNEEDYRHRGNRLYSFKTCTIKRIFSLQLLIEWGINGIRKQSEVNIDPVQIFCQVREHVEAEALPRYVPPPTYTEMAS.

Lys-118 participates in a covalent cross-link: Glycyl lysine isopeptide (Lys-Gly) (interchain with G-Cter in ubiquitin).

It belongs to the ART10 family. In terms of assembly, interacts with RSP5. Post-translationally, ubiquitinated by RSP5.

Its subcellular location is the cytoplasm. Its function is as follows. May regulate endocytosis by recruiting RSP5 ubiquitin ligase activity to specific plasma membrane proteins in response to extracellular stimuli. In Saccharomyces cerevisiae (strain Lalvin EC1118 / Prise de mousse) (Baker's yeast), this protein is Arrestin-related trafficking adapter 10 (ART10).